We begin with the raw amino-acid sequence, 283 residues long: Pantothenate synthetase (283 aa).

An ATP-binding site is contributed by 30–37 (MGNLHDGH). The active-site Proton donor is histidine 37. Glutamine 61 is a (R)-pantoate binding site. Glutamine 61 contacts beta-alanine. 149–152 (GEKD) lines the ATP pocket. Glutamine 155 provides a ligand contact to (R)-pantoate. Residue 186-189 (LSSR) participates in ATP binding.

This sequence belongs to the pantothenate synthetase family. As to quaternary structure, homodimer.

The protein localises to the cytoplasm. The enzyme catalyses (R)-pantoate + beta-alanine + ATP = (R)-pantothenate + AMP + diphosphate + H(+). It participates in cofactor biosynthesis; (R)-pantothenate biosynthesis; (R)-pantothenate from (R)-pantoate and beta-alanine: step 1/1. Its function is as follows. Catalyzes the condensation of pantoate with beta-alanine in an ATP-dependent reaction via a pantoyl-adenylate intermediate. This Escherichia coli (strain ATCC 8739 / DSM 1576 / NBRC 3972 / NCIMB 8545 / WDCM 00012 / Crooks) protein is Pantothenate synthetase.